The following is a 1176-amino-acid chain: Chromosome partition protein Smc (1176 aa).

Residue 32–39 coordinates ATP; the sequence is PNGCGKSN. The stretch at 169-506 forms a coiled coil; the sequence is GVSRYKERRR…VKLQEDVQKQ (338 aa). An SMC hinge domain is found at 521–623; sequence LGRLWQKLHI…TAPDLGQALA (103 aa). Coiled-coil stretches lie at residues 653 to 947 and 987 to 1024; these read DSEQ…LAAM and ERKE…LQAT.

This sequence belongs to the SMC family. In terms of assembly, homodimer.

It is found in the cytoplasm. Functionally, required for chromosome condensation and partitioning. The chain is Chromosome partition protein Smc from Bordetella petrii (strain ATCC BAA-461 / DSM 12804 / CCUG 43448).